The sequence spans 202 residues: Dephospho-CoA kinase (202 aa).

The region spanning 3 to 201 (AIGLTGGIGS…QRYLGFAAAA (199 aa)) is the DPCK domain. 11-16 (GSGKTT) provides a ligand contact to ATP.

This sequence belongs to the CoaE family.

The protein resides in the cytoplasm. It catalyses the reaction 3'-dephospho-CoA + ATP = ADP + CoA + H(+). It functions in the pathway cofactor biosynthesis; coenzyme A biosynthesis; CoA from (R)-pantothenate: step 5/5. Its function is as follows. Catalyzes the phosphorylation of the 3'-hydroxyl group of dephosphocoenzyme A to form coenzyme A. The protein is Dephospho-CoA kinase of Burkholderia lata (strain ATCC 17760 / DSM 23089 / LMG 22485 / NCIMB 9086 / R18194 / 383).